The following is a 131-amino-acid chain: Small ribosomal subunit protein uS8 (131 aa).

This sequence belongs to the universal ribosomal protein uS8 family. Part of the 30S ribosomal subunit. Contacts proteins S5 and S12.

Functionally, one of the primary rRNA binding proteins, it binds directly to 16S rRNA central domain where it helps coordinate assembly of the platform of the 30S subunit. In Bacteroides fragilis (strain ATCC 25285 / DSM 2151 / CCUG 4856 / JCM 11019 / LMG 10263 / NCTC 9343 / Onslow / VPI 2553 / EN-2), this protein is Small ribosomal subunit protein uS8.